An 852-amino-acid chain; its full sequence is MAKEKISPGMQQYLDIKKNYPDAFLLFRMGDFYELFYDDAVKAAQILEISLTSRNKNADNPIPMAGVPYHSAQAYIDVLVEMGYKVAIAEQMEDPKQAVGVVKREVVQVITPGTVVDSSKPDSANNFLVAIDKVGSRFGLSYMDVSTGEFFATELDDFSSVCSEIQNLKAREVVVGYDLLETDEQVLVNQLNLLLSKETEGYDDVHLIGNSLTDLESSVASKLLQYVHRTQMRELSHLQKAQHYEIKDYLQMSYATKSSLDLLENARTGKKHGSLFWLLDKTKTAMGMRLLRTWIDRPLVNQASIIERQNIIQVFLDNFFERSDLTESLKGVYDIERLASRVSFGKANPKDLIQLGHTLAQVPVIKAILESFNDDALSGLLQELDALPELESLIRSAIDPDAPATITEGGIIRDGFDETLDKYRKVMSEGTSWIADIEAKEREASGITTLKIDYNRKDGYYFHVTNSNLSLVPDHFFRKATLKNSERFGTAELAKIEGEMLEAREKSSTLEYDIFMRVREQVERYIDRLQSLAKAIATVDVLQSLAVTAETNHYVRPVFNDEHRIAIDRGRHAVVEKVMGVQEYIPNTITFDSQTNIQLITGPNMSGKSTYMRQLALSVVMAQMGAYVPADSVDLPVFDAIYTRIGAADDLISGQSTFMVEMMEANQAIKRATPNSLIIFDELGRGTATYDGMALAQSIIEFIHDKVGAKTMFATHYHELTALSNSLTHLVNVHVATLEKDGEVTFLHKIVDGPADKSYGIHVAKIAGLPTDLLNRADTILTQLEGETVVIQPQEKVLSQEKPAIETHVNEQISLFDDFTENPVLQELRDLDIYNMTPMQVMMAVADLKQKL.

Gly-602–Ser-609 provides a ligand contact to ATP.

The protein belongs to the DNA mismatch repair MutS family.

Functionally, this protein is involved in the repair of mismatches in DNA. It is possible that it carries out the mismatch recognition step. This protein has a weak ATPase activity. This is DNA mismatch repair protein MutS from Streptococcus thermophilus (strain ATCC BAA-250 / LMG 18311).